The sequence spans 516 residues: Gamma-aminobutyrate transaminase 1, mitochondrial (516 aa).

The transit peptide at 1–47 (MVIARGLLRSNASSSSSQAINLLKYVTSTGSLQGHTQNLCDASTRHF) directs the protein to the mitochondrion. Position 171-172 (171-172 (GS)) interacts with pyridoxal 5'-phosphate. Substrate is bound at residue Tyr204. Residue Asp311 coordinates pyridoxal 5'-phosphate. A substrate-binding site is contributed by Lys340. Lys340 carries the N6-(pyridoxal phosphate)lysine modification.

The protein belongs to the class-III pyridoxal-phosphate-dependent aminotransferase family. In terms of tissue distribution, expressed in roots, stems and panicles.

It localises to the mitochondrion. The catalysed reaction is 4-aminobutanoate + pyruvate = succinate semialdehyde + L-alanine. The enzyme catalyses 4-aminobutanoate + glyoxylate = succinate semialdehyde + glycine. Functionally, transaminase that degrades gamma-amino butyric acid (GABA) and uses pyruvate as amino-group acceptor, but not 2-oxoglutarate. Not involved in the interaction with blast fungus. The polypeptide is Gamma-aminobutyrate transaminase 1, mitochondrial (OSL2) (Oryza sativa subsp. japonica (Rice)).